A 294-amino-acid chain; its full sequence is Protoheme IX farnesyltransferase (294 aa).

9 consecutive transmembrane segments (helical) span residues 8–28 (LTKPGIVLGNLMSSAGGFLIA), 35–55 (YSLFITMIVGTALVIASGCVL), 81–101 (IFLNQSIFYAVILSIFGFLFL), 107–127 (VLTIYLSAIGLFIYVGVYSLW), 133–153 (IYSIMVGSISGAMPPVIGYCA), 163–183 (LMLLIIFSLWQIPHSHSIAIL), 209–226 (MVVYIIGFIIATILFTVM), 230–252 (SYIFLIIISIMNLWWLHMGFYGY), and 266–286 (FLLSLIIIISLNLLLSLDHIL).

The protein belongs to the UbiA prenyltransferase family. Protoheme IX farnesyltransferase subfamily.

It is found in the cell inner membrane. It catalyses the reaction heme b + (2E,6E)-farnesyl diphosphate + H2O = Fe(II)-heme o + diphosphate. It functions in the pathway porphyrin-containing compound metabolism; heme O biosynthesis; heme O from protoheme: step 1/1. Functionally, converts heme B (protoheme IX) to heme O by substitution of the vinyl group on carbon 2 of heme B porphyrin ring with a hydroxyethyl farnesyl side group. The protein is Protoheme IX farnesyltransferase of Blochmanniella pennsylvanica (strain BPEN).